The following is a 303-amino-acid chain: Beta-carotene 3-hydroxylase 2, chloroplastic (303 aa).

The N-terminal 52 residues, 1-52 (MAAGLSTIAVTLKPLNRSSFSANHPISTAVFPPSLRFNGFRRRKILTVCFVV), are a transit peptide targeting the chloroplast. 2 consecutive transmembrane segments (helical) span residues 96-116 (YLIA…MAVY) and 130-150 (VLEM…MEFW). In terms of domain architecture, Fatty acid hydroxylase spans 143–270 (AAVGMEFWAR…KFKGVPYGLF (128 aa)). The Histidine box-1 motif lies at 155 to 160 (HRALWH). Positions 165-171 (NMHESHH) match the Histidine box-2 motif. 2 helical membrane-spanning segments follow: residues 180-200 (LNDV…YYGF) and 206-226 (VPGL…AYMF). The short motif at 228–233 (HDGLVH) is the Histidine box-3 element. The Histidine box-4 motif lies at 254-258 (HQLHH).

Belongs to the sterol desaturase family. Homodimer. In terms of tissue distribution, expressed in leaves, flowers, stems, roots and siliques.

It is found in the plastid. The protein localises to the chloroplast membrane. The catalysed reaction is all-trans-beta-carotene + 4 reduced [2Fe-2S]-[ferredoxin] + 2 O2 + 4 H(+) = all-trans-zeaxanthin + 4 oxidized [2Fe-2S]-[ferredoxin] + 2 H2O. In terms of biological role, nonheme diiron monooxygenase involved in the biosynthesis of xanthophylls. Specific for beta-ring hydroxylations of beta-carotene. Also has a low activity toward the beta- and epsilon-rings of alpha-carotene. No activity with acyclic carotenoids such as lycopene and neurosporene. Uses ferredoxin as an electron donor. The chain is Beta-carotene 3-hydroxylase 2, chloroplastic (BETA-OHASE 2) from Arabidopsis thaliana (Mouse-ear cress).